A 378-amino-acid polypeptide reads, in one-letter code: tRNA-specific 2-thiouridylase MnmA (378 aa).

Residues 12–19 (GLSGGVDS) and M38 each bind ATP. Positions 98–100 (NPD) are interaction with target base in tRNA. C103 (nucleophile) is an active-site residue. Residues C103 and C201 are joined by a disulfide bond. G127 is an ATP binding site. Residues 151 to 153 (KDQ) form an interaction with tRNA region. The active-site Cysteine persulfide intermediate is C201. Positions 319–320 (RY) are interaction with tRNA.

This sequence belongs to the MnmA/TRMU family.

The protein resides in the cytoplasm. It catalyses the reaction S-sulfanyl-L-cysteinyl-[protein] + uridine(34) in tRNA + AH2 + ATP = 2-thiouridine(34) in tRNA + L-cysteinyl-[protein] + A + AMP + diphosphate + H(+). Functionally, catalyzes the 2-thiolation of uridine at the wobble position (U34) of tRNA, leading to the formation of s(2)U34. This chain is tRNA-specific 2-thiouridylase MnmA, found in Paracidovorax citrulli (strain AAC00-1) (Acidovorax citrulli).